The sequence spans 342 residues: Ribosomal RNA small subunit methyltransferase H (342 aa).

S-adenosyl-L-methionine is bound by residues 36-38, D56, F82, D100, and Q107; that span reads GGH. The segment at 309–342 is disordered; that stretch reads ENRESGMGKGHGAAASRFPTPDSRFPTSPNGDAP. Positions 333–342 are enriched in polar residues; sequence FPTSPNGDAP.

Belongs to the methyltransferase superfamily. RsmH family.

The protein localises to the cytoplasm. The catalysed reaction is cytidine(1402) in 16S rRNA + S-adenosyl-L-methionine = N(4)-methylcytidine(1402) in 16S rRNA + S-adenosyl-L-homocysteine + H(+). Specifically methylates the N4 position of cytidine in position 1402 (C1402) of 16S rRNA. The polypeptide is Ribosomal RNA small subunit methyltransferase H (Xanthomonas campestris pv. campestris (strain B100)).